We begin with the raw amino-acid sequence, 306 residues long: Beta-lactamase 1 (306 aa).

The N-terminal stretch at 1–27 (MILKNKRMLKIGICVGILGLSITSLEA) is a signal peptide. Ser91 functions as the Acyl-ester intermediate in the catalytic mechanism. The active-site Proton acceptor is the Glu187. 253–255 (KSG) serves as a coordination point for substrate.

The protein belongs to the class-A beta-lactamase family.

The enzyme catalyses a beta-lactam + H2O = a substituted beta-amino acid. In terms of biological role, this protein is a beta-lactamase with a substrate specificity for penicillins. The polypeptide is Beta-lactamase 1 (blaY) (Bacillus cereus).